The following is a 64-amino-acid chain: Conotoxin Vc1.3 (64 aa).

A signal peptide spans 1 to 21; the sequence is MGMRMMFTVFLLVVLATTVVS. Positions 22 to 43 are excised as a propeptide; that stretch reads FTSDRASDGRKAAASDLITLTI. 2 cysteine pairs are disulfide-bonded: C46-C52 and C47-C60. C60 is subject to Cysteine amide.

It belongs to the conotoxin A superfamily. Expressed by the venom duct.

It is found in the secreted. Functionally, may act as a toxin. The sequence is that of Conotoxin Vc1.3 from Conus victoriae (Queen Victoria cone).